The chain runs to 439 residues: Divalent metal cation transporter MntH 1 (439 aa).

Transmembrane regions (helical) follow at residues 64-84 (FGYA…LLQS), 139-161 (LLGV…VLAL), 171-191 (AIVL…LVLI), 214-234 (PLYL…LYLH), 262-282 (IGSL…AAAA), 300-320 (LLDP…ALLA), 359-379 (LVPA…KLLV), 380-400 (LSQV…IRFS), and 418-438 (LAWS…YFWF).

Belongs to the NRAMP family.

It is found in the cell inner membrane. Its function is as follows. H(+)-stimulated, divalent metal cation uptake system. The polypeptide is Divalent metal cation transporter MntH 1 (Pseudomonas aeruginosa (strain ATCC 15692 / DSM 22644 / CIP 104116 / JCM 14847 / LMG 12228 / 1C / PRS 101 / PAO1)).